Reading from the N-terminus, the 751-residue chain is Photosystem I P700 chlorophyll a apoprotein A1 (751 aa).

The next 8 helical transmembrane spans lie at 72–95 (IFSA…FHGA), 158–181 (LYCT…FHYH), 197–221 (MNHH…HVSL), 293–311 (TAHH…GHMY), 348–371 (WHAQ…HHMY), 387–413 (LSLF…IFMV), 435–457 (AIIS…LYVH), and 532–550 (FLVH…LILL). Positions 574 and 583 each coordinate [4Fe-4S] cluster. 2 consecutive transmembrane segments (helical) span residues 590-611 (HVFL…HFSW) and 665-687 (LSAY…MFLF). Chlorophyll a' is bound at residue His676. The chlorophyll a site is built by Met684 and Tyr692. Position 693 (Trp693) interacts with phylloquinone. Residues 725–745 (AVGVTHYLLGGIVTTWAFFLA) form a helical membrane-spanning segment.

The protein belongs to the PsaA/PsaB family. In terms of assembly, the PsaA/B heterodimer binds the P700 chlorophyll special pair and subsequent electron acceptors. PSI consists of a core antenna complex that captures photons, and an electron transfer chain that converts photonic excitation into a charge separation. The cyanobacterial PSI reaction center is composed of one copy each of PsaA,B,C,D,E,F,I,J,K,L,M and X, and forms trimeric complexes. PSI electron transfer chain: 5 chlorophyll a, 1 chlorophyll a', 2 phylloquinones and 3 4Fe-4S clusters. PSI core antenna: 90 chlorophyll a, 22 carotenoids, 3 phospholipids and 1 galactolipid. P700 is a chlorophyll a/chlorophyll a' dimer, A0 is one or more chlorophyll a, A1 is one or both phylloquinones and FX is a shared 4Fe-4S iron-sulfur center. serves as cofactor.

It is found in the cellular thylakoid membrane. The enzyme catalyses reduced [plastocyanin] + hnu + oxidized [2Fe-2S]-[ferredoxin] = oxidized [plastocyanin] + reduced [2Fe-2S]-[ferredoxin]. Functionally, psaA and PsaB bind P700, the primary electron donor of photosystem I (PSI), as well as the electron acceptors A0, A1 and FX. PSI is a plastocyanin/cytochrome c6-ferredoxin oxidoreductase, converting photonic excitation into a charge separation, which transfers an electron from the donor P700 chlorophyll pair to the spectroscopically characterized acceptors A0, A1, FX, FA and FB in turn. Oxidized P700 is reduced on the lumenal side of the thylakoid membrane by plastocyanin or cytochrome c6. This chain is Photosystem I P700 chlorophyll a apoprotein A1, found in Gloeothece citriformis (strain PCC 7424) (Cyanothece sp. (strain PCC 7424)).